An 860-amino-acid chain; its full sequence is MLKTILVAIFGSQNDRDIKAIQPVIEKINALEPYIKKLTDVELKEKTVEFRERLSKGETLDDVLPEAFACVREASVRTIGLRHFDVQLIGGYILHKGKIAEMKTGEGKTLVATLAAYLNALPQTGVHIVTVNDYLAKRDKEWMGVVYEKLGLTVGNVGNETKNEERRMAYNCDITYITNNEIGFDYLRDNMVIAKDDRVLRPLNYAIIDEVDSILIDEARTPLIISGACAESTDKYYISDRIVPRLKGRIITENEEIKAKYADVDLAKGYDYLIDEKNHSAVLTEQGVQKAEKMLGVKNIYDDLQSEWVHHLTQAIKAHNLYRRDIEYVVKDGKVIIVDEFTGRLMPGRRWSDGLHQSIEVKENLKIADENQTLATITFQNFFRMYKKIAGMTGTATTESEEFWEIYKLGVIEVPTNNPMIRKDYHDVIYRTEREKDNAVVNEIESLWKKGQPVLVGTRSIEKSEKISTMLRIKGIPHQVLNAKYHELEAQIIAGAGTKSAVTIATNMAGRGTDILLGAGDAVQNEEVKKSGGLHIIGTERHESRRIDNQLRGRSGRQGDPGSSKFFLSMEDELMRLFGSDKMSVIMQKLGLKENEDIQHLWISKAVENAQKKVEGMNFDIRKRLIDFDNVMNKQREAVYKLRNEILEGQDITDTIKDMISESIEEKITAWAVGKYTEEWDWASIDVWLLRTFGIKYETGNKDEISNLSRESARSAISGKVFEAYEHRKEQLTPELMLNMQRIVLLQMIDSSWRDHLYELDQLRHDIGFRAYAQKDPKVEYQKESFALFESMMNRVRDNTIEYIFKVQIDAKLQKMAIQTTNSDFRKNDGKKINKGSNKIGRNDQCPCGSGKKFKKCCGA.

Residues Q87, 105–109, and D514 contribute to the ATP site; that span reads GEGKT. Zn(2+)-binding residues include C846, C848, C857, and C858.

Belongs to the SecA family. As to quaternary structure, monomer and homodimer. Part of the essential Sec protein translocation apparatus which comprises SecA, SecYEG and auxiliary proteins SecDF. Other proteins may also be involved. Zn(2+) is required as a cofactor.

The protein resides in the cell membrane. It is found in the cytoplasm. The enzyme catalyses ATP + H2O + cellular proteinSide 1 = ADP + phosphate + cellular proteinSide 2.. Its function is as follows. Part of the Sec protein translocase complex. Interacts with the SecYEG preprotein conducting channel. Has a central role in coupling the hydrolysis of ATP to the transfer of proteins into and across the cell membrane, serving as an ATP-driven molecular motor driving the stepwise translocation of polypeptide chains across the membrane. This chain is Protein translocase subunit SecA, found in Endomicrobium trichonymphae.